We begin with the raw amino-acid sequence, 34 residues long: Photosystem II reaction center protein M (34 aa).

Residues 7 to 27 (GFVASLMFILVPAIFLIVLYI) form a helical membrane-spanning segment.

It belongs to the PsbM family. As to quaternary structure, PSII is composed of 1 copy each of membrane proteins PsbA, PsbB, PsbC, PsbD, PsbE, PsbF, PsbH, PsbI, PsbJ, PsbK, PsbL, PsbM, PsbT, PsbX, PsbY, PsbZ, Psb30/Ycf12, peripheral proteins PsbO, CyanoQ (PsbQ), PsbU, PsbV and a large number of cofactors. It forms dimeric complexes.

The protein resides in the cellular thylakoid membrane. Its function is as follows. One of the components of the core complex of photosystem II (PSII). PSII is a light-driven water:plastoquinone oxidoreductase that uses light energy to abstract electrons from H(2)O, generating O(2) and a proton gradient subsequently used for ATP formation. It consists of a core antenna complex that captures photons, and an electron transfer chain that converts photonic excitation into a charge separation. This subunit is found at the monomer-monomer interface. In Synechococcus sp. (strain CC9902), this protein is Photosystem II reaction center protein M.